The sequence spans 569 residues: Urease subunit alpha (569 aa).

The Urease domain maps to 131–569; the sequence is GGIDTHIHFI…LPMAQRYFLL (439 aa). Residues His-136, His-138, and Lys-219 each contribute to the Ni(2+) site. At Lys-219 the chain carries N6-carboxylysine. His-221 lines the substrate pocket. Ni(2+)-binding residues include His-248 and His-274. The active-site Proton donor is the His-322. Asp-362 contributes to the Ni(2+) binding site.

Belongs to the metallo-dependent hydrolases superfamily. Urease alpha subunit family. In terms of assembly, heterotrimer of UreA (gamma), UreB (beta) and UreC (alpha) subunits. Three heterotrimers associate to form the active enzyme. Requires Ni cation as cofactor. Carboxylation allows a single lysine to coordinate two nickel ions.

It localises to the cytoplasm. The enzyme catalyses urea + 2 H2O + H(+) = hydrogencarbonate + 2 NH4(+). It functions in the pathway nitrogen metabolism; urea degradation; CO(2) and NH(3) from urea (urease route): step 1/1. In Synechococcus sp. (strain RCC307), this protein is Urease subunit alpha.